A 265-amino-acid chain; its full sequence is MKIAIAGASGRMGRMLIEAVLNDADAQLVGALDRAGSPFLGQDAGAFLGKDTGIKLTDDLDAVFAQAEYLIDFTRPEGTMAHIAAALRHDVKLVIGTTGFTAEQKAELQAAAGKIGIVFAANMSVGVNVTLKLLEFAAKHFSHGYDIEIIEAHHRHKVDAPSGTALMMGEAVAGALGRSLDDCAVYGRHGVTGERDPSSIGFAAVRGGDIVGDHTVLFAGIGERIEITHKSSSRVSYAQGALRAVRFLSARGAGLFDMQDVLGLR.

Residues 7–12 and Asp-33 contribute to the NAD(+) site; that span reads GASGRM. Residue Arg-34 coordinates NADP(+). NAD(+) contacts are provided by residues 96–98 and 120–123; these read GTT and AANM. The active-site Proton donor/acceptor is the His-153. Residue His-154 coordinates (S)-2,3,4,5-tetrahydrodipicolinate. Lys-157 functions as the Proton donor in the catalytic mechanism. 163-164 provides a ligand contact to (S)-2,3,4,5-tetrahydrodipicolinate; it reads GT.

The protein belongs to the DapB family.

It is found in the cytoplasm. It carries out the reaction (S)-2,3,4,5-tetrahydrodipicolinate + NAD(+) + H2O = (2S,4S)-4-hydroxy-2,3,4,5-tetrahydrodipicolinate + NADH + H(+). The enzyme catalyses (S)-2,3,4,5-tetrahydrodipicolinate + NADP(+) + H2O = (2S,4S)-4-hydroxy-2,3,4,5-tetrahydrodipicolinate + NADPH + H(+). The protein operates within amino-acid biosynthesis; L-lysine biosynthesis via DAP pathway; (S)-tetrahydrodipicolinate from L-aspartate: step 4/4. Its function is as follows. Catalyzes the conversion of 4-hydroxy-tetrahydrodipicolinate (HTPA) to tetrahydrodipicolinate. The polypeptide is 4-hydroxy-tetrahydrodipicolinate reductase (Burkholderia cenocepacia (strain ATCC BAA-245 / DSM 16553 / LMG 16656 / NCTC 13227 / J2315 / CF5610) (Burkholderia cepacia (strain J2315))).